The following is a 336-amino-acid chain: Tetraacyldisaccharide 4'-kinase (336 aa).

60–67 (TVGGTGKT) serves as a coordination point for ATP.

The protein belongs to the LpxK family.

It catalyses the reaction a lipid A disaccharide + ATP = a lipid IVA + ADP + H(+). It participates in glycolipid biosynthesis; lipid IV(A) biosynthesis; lipid IV(A) from (3R)-3-hydroxytetradecanoyl-[acyl-carrier-protein] and UDP-N-acetyl-alpha-D-glucosamine: step 6/6. Transfers the gamma-phosphate of ATP to the 4'-position of a tetraacyldisaccharide 1-phosphate intermediate (termed DS-1-P) to form tetraacyldisaccharide 1,4'-bis-phosphate (lipid IVA). This Pseudomonas fluorescens (strain ATCC BAA-477 / NRRL B-23932 / Pf-5) protein is Tetraacyldisaccharide 4'-kinase.